We begin with the raw amino-acid sequence, 423 residues long: Replication factor C large subunit (423 aa).

An ATP-binding site is contributed by 63–70 (GPPGIGKT).

This sequence belongs to the activator 1 small subunits family. RfcL subfamily. As to quaternary structure, heteromultimer composed of small subunits (RfcS) and large subunits (RfcL).

Part of the RFC clamp loader complex which loads the PCNA sliding clamp onto DNA. The polypeptide is Replication factor C large subunit (Pyrobaculum islandicum (strain DSM 4184 / JCM 9189 / GEO3)).